We begin with the raw amino-acid sequence, 778 residues long: GRIP and coiled-coil domain-containing protein 1 (778 aa).

Residues 13–61 (SKKDLLETIETQKKQLLQYQARLKDVVRAYKSLLKEKEALEASIKVLSV) adopt a coiled-coil conformation. Disordered stretches follow at residues 70–157 (SGVQ…MDKR), 186–208 (YLADKKKMKQDLEDANKKAEEER), and 617–638 (GRRSPVGGVGGGGLGDPADTAS). Positions 83 to 93 (VDDRCSTHSED) are enriched in basic and acidic residues. Low complexity-rich tracts occupy residues 94-109 (STGTATSLDTAASLTS) and 133-152 (ASGSESGVSSSSGDGPSAGS). Residues 152–702 (SEMDKRVHQL…EEGERHREEV (551 aa)) are a coiled coil. One can recognise a GRIP domain in the interval 716-766 (QSREGANLEYLKNIIYRFLTLPDSLGRQQTLTAILTILHFSPEEKQVLMRL).

The protein localises to the cytoplasm. Its subcellular location is the golgi apparatus membrane. Probably involved in maintaining Golgi structure. The sequence is that of GRIP and coiled-coil domain-containing protein 1 (Gcc1) from Mus musculus (Mouse).